The chain runs to 98 residues: Small ribosomal subunit protein uS19 (98 aa).

The tract at residues 77 to 98 (TRTYRGHAGGKAEKGGSAPKRK) is disordered.

This sequence belongs to the universal ribosomal protein uS19 family.

Functionally, protein S19 forms a complex with S13 that binds strongly to the 16S ribosomal RNA. The polypeptide is Small ribosomal subunit protein uS19 (Prosthecochloris aestuarii (strain DSM 271 / SK 413)).